Reading from the N-terminus, the 165-residue chain is MTLEEFSAAEQKTERMDTVGDALEEVLSKARSQRTITVGVYEAAKLLNVDPDNVVLCLLAADEDDDRDVALQIHFTLIRAFCCENDINILRVSNPGRLAELLLLENDAGPAESGGAAQTPDLHCVLVTNPHSSQWKDPALSQLICFCRESRYMDQWVPVINLPER.

At T2 the chain carries Phosphothreonine.

It belongs to the GADD45 family. As to quaternary structure, interacts with AURKA, GADD45GIP1 and PCNA. Interacts with MAPK14.

Its subcellular location is the nucleus. Functionally, might affect PCNA interaction with some CDK (cell division protein kinase) complexes; stimulates DNA excision repair in vitro and inhibits entry of cells into S phase. In T-cells, functions as a regulator of p38 MAPKs by inhibiting p88 phosphorylation and activity. This Mus musculus (Mouse) protein is Growth arrest and DNA damage-inducible protein GADD45 alpha (Gadd45a).